A 444-amino-acid chain; its full sequence is MSSSYDEASLAPEETTDSFWEVGNYKRTVKRIDDGHRLCNDLMNCVQERAKIEKAYGQQLTDWAKRWRQLIEKGPQYGSLERAWGAIMTEADKVSELHQEVKNNLLNEDLEKVKNWQKDAYHKQIMGGFKETKEAEDGFRKAQKPWAKKMKELEAAKKAYHLACKEEKLAMTREMNSKTEQSVTPEQQKKLQDKVDKCKQDVQKTQEKYEKVLEDVGKTTPQYMENMEQVFEQCQQFEEKRLVFLKEVLLDIKRHLNLAENSSYIHVYRELEQAIRGADAQEDLRWFRSTSGPGMPMNWPQFEEWNPDLPHTTTKKEKQPKKAEGVALTNATGAVESTSQAGDRGSVSSYDRGQPYATEWSDDESGNPFGGSETNGGANPFEDDSKGVRVRALYDYDGQEQDELSFKAGDELTKLGEEDEQGWCRGRLDSGQLGLYPANYVEAI.

Phosphoserine is present on residues Ser-2 and Ser-79. Positions 13 to 283 (EETTDSFWEV…AIRGADAQED (271 aa)) constitute an F-BAR domain. Residues 26–275 (KRTVKRIDDG…HVYRELEQAI (250 aa)) are a coiled coil. 2 disordered regions span residues 175 to 194 (MNSK…LQDK) and 309 to 386 (LPHT…DDSK). A Phosphothreonine modification is found at Thr-184. The span at 314–324 (TKKEKQPKKAE) shows a compositional bias: basic and acidic residues. The span at 329-351 (TNATGAVESTSQAGDRGSVSSYD) shows a compositional bias: polar residues. 5 positions are modified to phosphoserine: Ser-346, Ser-348, Ser-349, Ser-361, and Ser-365. Residues 385–444 (SKGVRVRALYDYDGQEQDELSFKAGDELTKLGEEDEQGWCRGRLDSGQLGLYPANYVEAI) enclose the SH3 domain. Residue Tyr-394 is modified to Phosphotyrosine. Residues Ser-405 and Ser-430 each carry the phosphoserine modification.

This sequence belongs to the PACSIN family. May form heterooligomers with other PACSINs. Interacts with MAPT. Interacts with TRPV4. Interacts (via SH3 domain) with SYNJ1 and WASL. Interacts with DNM2 and DNM3. Interacts with both COBL and DBNL. Identified in a complex composed of COBL, PACSIN1 and WASL. Interacts with EHD1 and EHD3. Homodimer. Interacts (via SH3 domain) with DNM1; the interaction is reduced by DNM1 phosphorylation. Phosphorylated by casein kinase 2 (CK2) and protein kinase C (PKC). In terms of tissue distribution, highly expressed in brain and, at much lower levels, in heart and pancreas.

Its subcellular location is the cytoplasm. The protein localises to the cell projection. It localises to the synapse. The protein resides in the synaptosome. It is found in the ruffle membrane. Its subcellular location is the membrane. The protein localises to the cytoplasmic vesicle membrane. It localises to the cytosol. The protein resides in the cell membrane. Plays a role in the reorganization of the microtubule cytoskeleton via its interaction with MAPT; this decreases microtubule stability and inhibits MAPT-induced microtubule polymerization. Plays a role in cellular transport processes by recruiting DNM1, DNM2 and DNM3 to membranes. Plays a role in the reorganization of the actin cytoskeleton and in neuron morphogenesis via its interaction with COBL and WASL, and by recruiting COBL to the cell cortex. Plays a role in the regulation of neurite formation, neurite branching and the regulation of neurite length. Required for normal synaptic vesicle endocytosis; this process retrieves previously released neurotransmitters to accommodate multiple cycles of neurotransmission. Required for normal excitatory and inhibitory synaptic transmission. Binds to membranes via its F-BAR domain and mediates membrane tubulation. The polypeptide is Protein kinase C and casein kinase substrate in neurons protein 1 (PACSIN1) (Homo sapiens (Human)).